Reading from the N-terminus, the 82-residue chain is Small ribosomal subunit protein uS17 (82 aa).

This sequence belongs to the universal ribosomal protein uS17 family. As to quaternary structure, part of the 30S ribosomal subunit.

Its function is as follows. One of the primary rRNA binding proteins, it binds specifically to the 5'-end of 16S ribosomal RNA. This Synechococcus elongatus (strain ATCC 33912 / PCC 7942 / FACHB-805) (Anacystis nidulans R2) protein is Small ribosomal subunit protein uS17.